The chain runs to 458 residues: uncharacterized protein (458 aa).

The protein belongs to the glycerate kinase type-2 family.

This is an uncharacterized protein from Caenorhabditis elegans.